A 320-amino-acid polypeptide reads, in one-letter code: ATP-dependent 6-phosphofructokinase (320 aa).

Glycine 12 is an ATP binding site. ADP is bound at residue 22 to 26 (RSVIR). ATP-binding positions include 73-74 (RF) and 103-106 (GDGS). Residue aspartate 104 participates in Mg(2+) binding. 126–128 (TID) is a substrate binding site. The Proton acceptor role is filled by aspartate 128. Arginine 155 contacts ADP. Residues arginine 163 and 170 to 172 (MGR) contribute to the substrate site. ADP is bound by residues 186–188 (GAE) and 214–216 (KRH). Substrate is bound by residues glutamate 223, arginine 244, and 250–253 (HIQR).

This sequence belongs to the phosphofructokinase type A (PFKA) family. ATP-dependent PFK group I subfamily. Prokaryotic clade 'B1' sub-subfamily. Homotetramer. It depends on Mg(2+) as a cofactor.

It is found in the cytoplasm. It catalyses the reaction beta-D-fructose 6-phosphate + ATP = beta-D-fructose 1,6-bisphosphate + ADP + H(+). It functions in the pathway carbohydrate degradation; glycolysis; D-glyceraldehyde 3-phosphate and glycerone phosphate from D-glucose: step 3/4. Its activity is regulated as follows. Allosterically activated by ADP and other diphosphonucleosides, and allosterically inhibited by phosphoenolpyruvate. Catalyzes the phosphorylation of D-fructose 6-phosphate to fructose 1,6-bisphosphate by ATP, the first committing step of glycolysis. In Tolumonas auensis (strain DSM 9187 / NBRC 110442 / TA 4), this protein is ATP-dependent 6-phosphofructokinase.